The sequence spans 404 residues: Putative nitronate monooxygenase (404 aa).

41–43 (PMA) contacts FMN. The Proton acceptor role is filled by His224. His224 is a binding site for substrate. Residues 270–272 (AGG) and 293–294 (GT) each bind FMN.

Belongs to the nitronate monooxygenase family. NMO class I subfamily. FMN serves as cofactor.

The protein resides in the cytoplasm. It catalyses the reaction ethylnitronate + O2 = chemical entity + acetaldehyde + nitrite + H(+). Catalyzes the oxidation of alkyl nitronates to produce the corresponding carbonyl compounds and nitrites. This chain is Putative nitronate monooxygenase, found in Saccharomyces cerevisiae (strain ATCC 204508 / S288c) (Baker's yeast).